The sequence spans 391 residues: uncharacterized protein (391 aa).

This is an uncharacterized protein from Methanocaldococcus jannaschii (strain ATCC 43067 / DSM 2661 / JAL-1 / JCM 10045 / NBRC 100440) (Methanococcus jannaschii).